The chain runs to 1041 residues: MKPECGQTMFRTFWSRSRDSSAMDPPLQSEEDSQTQPSLPSPLTSYRWHTGGSGEKAAGGFRWGRFAGWGRALSHQEPMVNSQPAPRSLFRRVLSAPPKESRSNRLRFSKTLWGRHKNVAPLEPKPNPKAPEPELELVADPDLPVAQIPEPPTPDMPVWNIDGFTLLEGKLVMLGEEEGPRQIRVGSASSENSMQAALGNLKDAVRTPGKTEPEAAGSNQVHNVRKLLKRLKEKKRAKSELGAYTPRDGPPSALGSRESLATLSELDLGAERDVRVWPLHPSLLGEPYCFQVTWAGGSLCFSCRSSAERDRWIEDLRRQFQPSQDNVERQEMWLTVWVHEAKGLPRATVPGVRAELWLDGALLARTAPRAGPGQLFWAERFHFEALPPARRLSLRLRSAGPAGATVGRVVLELDEVSIPRAPAAGLERWFPVLGAPAGAVLRARIRVRCLRVLPSERYKELAEFLTFHYARLCGALEPALSAQAKEELAAAMVRVLRATGRAQALVTDLGTAELARCGGREALLFRENTLATKAIDEYMKLVAQEYLQDTLGQVVRCLCASTEDCEVDPSKCPTPELPKHQARLRDSCEEVFENIIHSYNCFPAELGSVFSSWREACKARGSEALGPRLVCASLFLRLLCPAILAPSLFGLAPEHPAPGPARTLTLIAKVIQNLANCAPFGEKEAYMAFMNSFLEDHGPAMQHFLDQVATVDADTTPSGYQGSGDLALQLAVLHVQLCTIFAELDQKTQDSLEPLPTILRAIEEGRPVPVSVPMRLPRISTQVQSSFFSGEKPGFLAPRDLPKHTPLISKSQSLRSFQGAGSWASRRPDEERPQRRPRPVLRTQSVPARRPTHRRPSAGSKPRPKGSLRMGPAPCGRAWTRASASLPRKPSVPWQRQMDQPGDRYQTTGTHRPVGKLAEIQCEVAIFREAQKALSLLVESLSTQVQALKEQQEHFRCQLQDLYSRLGAGISKLDSKGGLPSNGSHRLKSLEQRLTEMECSQDQLRDSLQSLQLLSKTPGSRSQPLPLKAPCVNGADLSMGT.

Residues 1-59 (MKPECGQTMFRTFWSRSRDSSAMDPPLQSEEDSQTQPSLPSPLTSYRWHTGGSGEKAAG) are disordered. A compositionally biased stretch (polar residues) spans 34–44 (QTQPSLPSPLT). Residues Ser-41, Ser-74, Ser-187, Ser-189, Ser-190, Ser-193, Ser-239, Ser-252, Ser-256, and Ser-259 each carry the phosphoserine modification. Positions 218–243 (SNQVHNVRKLLKRLKEKKRAKSELGA) form a coiled coil. In terms of domain architecture, PH spans 220–321 (QVHNVRKLLK…WIEDLRRQFQ (102 aa)). A disordered region spans residues 234-256 (KKRAKSELGAYTPRDGPPSALGS). A Phosphothreonine modification is found at Thr-262. The C2 domain occupies 312–430 (WIEDLRRQFQ…APAAGLERWF (119 aa)). In terms of domain architecture, Ras-GAP spans 500-708 (GRAQALVTDL…PAMQHFLDQV (209 aa)). The interval 790 to 910 (GEKPGFLAPR…PGDRYQTTGT (121 aa)) is disordered. Residues Ser-813 and Ser-816 each carry the phosphoserine modification. Residues 850–866 (RPTHRRPSAGSKPRPKG) show a composition bias toward basic residues. Residues 931-1013 (QKALSLLVES…LRDSLQSLQL (83 aa)) are a coiled coil. The segment at 1016 to 1041 (KTPGSRSQPLPLKAPCVNGADLSMGT) is disordered.

In terms of tissue distribution, predominantly expressed in hematopoietic tissues.

The protein resides in the cytoplasm. The protein localises to the cell cortex. In terms of biological role, functions as a Ras GTPase-activating protein. Plays an important role in the expansion and functions of natural killer T (NKT) cells in the liver by negatively regulating RAS activity and the down-stream ERK signaling pathway. This chain is RAS protein activator like-3 (Rasal3), found in Mus musculus (Mouse).